Here is a 69-residue protein sequence, read N- to C-terminus: uncharacterized protein (69 aa).

The N-terminal stretch at 1–21 (MELLIPLSLLGLYLFSGTRDS) is a signal peptide. An N-linked (GlcNAc...) asparagine glycan is attached at asparagine 41.

Its subcellular location is the secreted. This is an uncharacterized protein from Dictyostelium discoideum (Social amoeba).